Reading from the N-terminus, the 426-residue chain is Serine--tRNA ligase (426 aa).

232 to 234 (TAE) contributes to the L-serine binding site. An ATP-binding site is contributed by 263–265 (RSE). Glu286 is an L-serine binding site. Position 350 to 353 (350 to 353 (EISS)) interacts with ATP. Ser385 contributes to the L-serine binding site.

The protein belongs to the class-II aminoacyl-tRNA synthetase family. Type-1 seryl-tRNA synthetase subfamily. In terms of assembly, homodimer. The tRNA molecule binds across the dimer.

The protein resides in the cytoplasm. The catalysed reaction is tRNA(Ser) + L-serine + ATP = L-seryl-tRNA(Ser) + AMP + diphosphate + H(+). The enzyme catalyses tRNA(Sec) + L-serine + ATP = L-seryl-tRNA(Sec) + AMP + diphosphate + H(+). Its pathway is aminoacyl-tRNA biosynthesis; selenocysteinyl-tRNA(Sec) biosynthesis; L-seryl-tRNA(Sec) from L-serine and tRNA(Sec): step 1/1. Catalyzes the attachment of serine to tRNA(Ser). Is also able to aminoacylate tRNA(Sec) with serine, to form the misacylated tRNA L-seryl-tRNA(Sec), which will be further converted into selenocysteinyl-tRNA(Sec). The polypeptide is Serine--tRNA ligase (Pediococcus pentosaceus (strain ATCC 25745 / CCUG 21536 / LMG 10740 / 183-1w)).